The chain runs to 1120 residues: ELKS/Rab6-interacting/CAST family member 1 (1120 aa).

Residues 1-54 (MYGSARSVGKVEPSSQSPGRSPRLPRSPRLGHRRTNSTGGSSGNSVGGGSGKTL) form a disordered region. Lysine 10 carries the N6-acetyllysine modification. Residues 13-28 (PSSQSPGRSPRLPRSP) are compositionally biased toward low complexity. Phosphoserine occurs at positions 17, 21, and 37. Threonine 38 bears the Phosphothreonine mark. Positions 40 to 51 (GSSGNSVGGGSG) are enriched in gly residues. Phosphoserine is present on residues serine 55, serine 75, serine 94, serine 824, leucine 965, and serine 1009. A coiled-coil region spans residues 144–992 (RQARDNTIMD…RMKLMADNYE (849 aa)). Positions 801–824 (KHKEQVEKKKSAQMLEEARRREDS) are enriched in basic and acidic residues. A disordered region spans residues 801–840 (KHKEQVEKKKSAQMLEEARRREDSLSDSSQQLQDSLRKKD). Threonine 1050 is modified (phosphothreonine). One can recognise an FIP-RBD domain in the interval 1050 to 1112 (TPPASYNADG…DHCPDILEQV (63 aa)). A coiled-coil region spans residues 1060–1104 (EQAAWENELQQMTQEQLQNELEKVEGDNAELQEFANTILQQIADH).

As to quaternary structure, interacts with the GTB-bound forms of RAB6A isoform 1 and isoform 2 and with RAB6B. The interaction was strongest with RAB6B, followed by RAB6A isoform 2 and weakest with RAB6A isoform 1. Part of a complex with CHUK, IKBKB and IKBKG. Interacts with CHUK, IKBKB and IKBKG. The interaction with IKBKG is independent of CHUK and IKBKB. Interacts with NFKBIA. Isoform 2 interacts through its C-terminus with the PDZ domains of RIMS1 and RIMS2. Interacts with ERC2/CAST1. Interacts with SDCCAG8. Part of a cortical microtubule stabilization complex (CMSC) composed of KANK1, PPFIA1, PPFIBP1, ERC1/ELKS, PHLDB2/LL5beta, CLASPs, KIF21A and possibly additional interactors; within CMSCs KANK1 and PHLDB2/LL5beta appear to be the core components for targeting of microtubule-binding proteins KIF21A and CLASPs, whereas PPFIA1, PPFIBP1 and ERC1/ELKS serve as scaffolds for protein clustering. In terms of tissue distribution, widely expressed.

Its subcellular location is the cytoplasm. It localises to the cytoskeleton. The protein localises to the microtubule organizing center. The protein resides in the centrosome. It is found in the membrane. Its subcellular location is the golgi apparatus membrane. It localises to the presynaptic active zone. The protein localises to the cell projection. The protein resides in the podosome. Functionally, regulatory subunit of the IKK complex. Probably recruits IkappaBalpha/NFKBIA to the complex. May be involved in the organization of the cytomatrix at the nerve terminals active zone (CAZ) which regulates neurotransmitter release. May be involved in vesicle trafficking at the CAZ. May be involved in Rab-6 regulated endosomes to Golgi transport. The chain is ELKS/Rab6-interacting/CAST family member 1 from Mus musculus (Mouse).